We begin with the raw amino-acid sequence, 165 residues long: UPF0114 protein in repA1-repA2 intergenic region (165 aa).

3 consecutive transmembrane segments (helical) span residues 10 to 32, 53 to 75, and 134 to 156; these read YASRWLMFPVYIGLSLGFILLTL, LVLVVLSLIDISLVGGLLVMVMF, and DQIMWCVLIHLTFVISAFGMACI.

This sequence belongs to the UPF0114 family.

Its subcellular location is the cell membrane. This chain is UPF0114 protein in repA1-repA2 intergenic region, found in Buchnera aphidicola subsp. Baizongia pistaciae (strain Bp).